The sequence spans 131 residues: Small ribosomal subunit protein uS11 (131 aa).

It belongs to the universal ribosomal protein uS11 family. As to quaternary structure, part of the 30S ribosomal subunit. Interacts with proteins S7 and S18. Binds to IF-3.

In terms of biological role, located on the platform of the 30S subunit, it bridges several disparate RNA helices of the 16S rRNA. Forms part of the Shine-Dalgarno cleft in the 70S ribosome. In Syntrophotalea carbinolica (strain DSM 2380 / NBRC 103641 / GraBd1) (Pelobacter carbinolicus), this protein is Small ribosomal subunit protein uS11.